The following is a 580-amino-acid chain: Acyl--CoA ligase GME11374 (580 aa).

The protein belongs to the ATP-dependent AMP-binding enzyme family.

It functions in the pathway secondary metabolite biosynthesis. In terms of biological role, acyl--CoA ligase; part of the gene cluster that mediates the biosynthesis of dibenzodioxocinones such as pestalotiollide B, a novel class of inhibitors against cholesterol ester transfer protein (CEPT). The biosynthesis initiates from condensation of acetate and malonate units catalyzed by the non-reducing PKS pks8/GME11356. Pks8/GME11356 lacks a thioesterase (TE) domain, which is important to the cyclizing of the third ring of atrochrysone carboxylic acid, and the esterase GME11355 might play the role of TE and catalyzes the cyclization reaction of the C ring. The lactamase-like protein GME11357 (or other beta-lactamases in Pestalotiopsis microspora) probably hydrolyzes the thioester bond between the ACP of pks8/GME11356 and the intermediate to release atrochrysone carboxylic acid, which is spontaneously dehydrates to form endocrocin anthrone. Endocrocin anthrone is further converted to emodin via the endocrocin intermediate. Emodin is then oxidized by several enzymes such as the Baeyer-Villiger oxidase GME11358, the oxidoreductase GME11367, the short chain dehydrogenase/reductase GME11373, as well as by other oxidoreductases from the cluster, to modify the A and C rings and open the B ring, and finally yield monodictyphenone. The prenyltransferase GME11375 may catalyze the addition reaction between the C5 side chains and the carbon bone of dibenzodioxocinones. The remaining biochemical reactions to the final product dibenzodioxocinones should be methylation catalyzed by methyltransferase GME11366 and reduction and lactonization reaction catalyzed by a series of oxidordeuctases. This chain is Acyl--CoA ligase GME11374, found in Pestalotiopsis microspora.